Here is a 193-residue protein sequence, read N- to C-terminus: Signal peptidase I (193 aa).

Over 1-25 (MTEEQKPTSEKSVKRKSNTYWEWGK) the chain is Cytoplasmic. The chain crosses the membrane as a helical span at residues 26-42 (AIIIAVALALLIRHFLF). The Extracellular portion of the chain corresponds to 43–193 (EPYLVEGSSM…FPFHDMRQTK (151 aa)). Active-site residues include S51 and K93.

This sequence belongs to the peptidase S26 family.

It localises to the cell membrane. The catalysed reaction is Cleavage of hydrophobic, N-terminal signal or leader sequences from secreted and periplasmic proteins.. This chain is Signal peptidase I (sipS2), found in Bacillus amyloliquefaciens (Bacillus velezensis).